We begin with the raw amino-acid sequence, 329 residues long: 4-hydroxythreonine-4-phosphate dehydrogenase (329 aa).

Residues His-136 and Thr-137 each coordinate substrate. His-166, His-211, and His-266 together coordinate a divalent metal cation. The substrate site is built by Lys-274, Asn-283, and Arg-292.

It belongs to the PdxA family. As to quaternary structure, homodimer. The cofactor is Zn(2+). It depends on Mg(2+) as a cofactor. Co(2+) is required as a cofactor.

The protein localises to the cytoplasm. It carries out the reaction 4-(phosphooxy)-L-threonine + NAD(+) = 3-amino-2-oxopropyl phosphate + CO2 + NADH. Its pathway is cofactor biosynthesis; pyridoxine 5'-phosphate biosynthesis; pyridoxine 5'-phosphate from D-erythrose 4-phosphate: step 4/5. Functionally, catalyzes the NAD(P)-dependent oxidation of 4-(phosphooxy)-L-threonine (HTP) into 2-amino-3-oxo-4-(phosphooxy)butyric acid which spontaneously decarboxylates to form 3-amino-2-oxopropyl phosphate (AHAP). This chain is 4-hydroxythreonine-4-phosphate dehydrogenase, found in Escherichia coli O81 (strain ED1a).